We begin with the raw amino-acid sequence, 191 residues long: MIRISDAAQAHFAKLLANQEEGTQIRVFVINPGTPNAECGVSYCPPDAVEATDTALKFDLLTAYVDELSAPYLEDAEIDFVTDQLGSQLTLKAPNAKMRKVADDAPLMERVEYALQSQINPQLAGHGGRVSLMEITDEGYAILQFGGGCNGCSMVDVTLKEGIEKQLLNEFPELKGVRDLTEHQRGEHSYY.

The [4Fe-4S] cluster site is built by Cys149 and Cys152.

Belongs to the NfuA family. In terms of assembly, homodimer. [4Fe-4S] cluster is required as a cofactor.

Its function is as follows. Involved in iron-sulfur cluster biogenesis. Binds a 4Fe-4S cluster, can transfer this cluster to apoproteins, and thereby intervenes in the maturation of Fe/S proteins. Could also act as a scaffold/chaperone for damaged Fe/S proteins. The chain is Fe/S biogenesis protein NfuA from Salmonella choleraesuis (strain SC-B67).